Reading from the N-terminus, the 2124-residue chain is AMB antimetabolite synthetase AmbE (2124 aa).

Residues Leu-456 to Ile-847 are adenylation. The segment at Asp-950–Val-1147 is methyltransferase. The region spanning Ala-1251 to Ala-1325 is the Carrier 1 domain. Ser-1286 is modified (O-(pantetheine 4'-phosphoryl)serine). Residues Asp-1359–Pro-1780 are condensation. The region spanning Ala-1785–Asp-1859 is the Carrier 2 domain. An O-(pantetheine 4'-phosphoryl)serine modification is found at Ser-1819. Positions Arg-1886 to Arg-2107 are thioesterase.

It belongs to the NRP synthetase family. Pantetheine 4'-phosphate is required as a cofactor.

It catalyses the reaction holo-[peptidyl-carrier protein] + L-glutamate + ATP = L-glutamyl-[peptidyl-carrier protein] + AMP + diphosphate. Functionally, involved in the biosynthesis of the antimetabolite L-2-amino-4-methoxy-trans-3-butenoic acid (AMB), a non-proteinogenic amino acid which is toxic for prokaryotes and eukaryotes. Adenylates L-glutamate and loads it onto its first peptidyl carrier domain via a thioester linkage to the phosphopanthetheine moiety. The second peptidyl carrier domain is loaded with a L-alanine activated by AmbB. After formation by AmbB of the L-Glu-L-Ala dipeptide at the first carrier domain of AmbE, the condensation domain of AmbE probably condenses this dipeptide with the L-Ala residue attached at the second carrier domain of AmbE to give the L-Ala-L-Glu-L-Ala tripeptide. The central amino acid, L-Glu, would then undergo a series of modifications to be converted into AMB while the two flanking L-Ala residues remain in place. Finally, the L-Ala-AMB-L-Ala tripeptide is probably released by thioester cleavage via the thioester domain of AmbE. The sequence is that of AMB antimetabolite synthetase AmbE from Pseudomonas aeruginosa (strain ATCC 15692 / DSM 22644 / CIP 104116 / JCM 14847 / LMG 12228 / 1C / PRS 101 / PAO1).